A 277-amino-acid polypeptide reads, in one-letter code: Phosphatidylglycerol--prolipoprotein diacylglyceryl transferase (277 aa).

The next 3 helical transmembrane spans lie at 16–36, 62–82, and 101–121; these read FFQI…FYFL, LLFF…VLFY, and GMAF…FAHL. Arginine 145 is an a 1,2-diacyl-sn-glycero-3-phospho-(1'-sn-glycerol) binding site. A run of 2 helical transmembrane segments spans residues 214 to 234 and 243 to 263; these read PIWG…RFIA and FLGL…PMIV.

Belongs to the Lgt family.

Its subcellular location is the cell inner membrane. The enzyme catalyses L-cysteinyl-[prolipoprotein] + a 1,2-diacyl-sn-glycero-3-phospho-(1'-sn-glycerol) = an S-1,2-diacyl-sn-glyceryl-L-cysteinyl-[prolipoprotein] + sn-glycerol 1-phosphate + H(+). It participates in protein modification; lipoprotein biosynthesis (diacylglyceryl transfer). In terms of biological role, catalyzes the transfer of the diacylglyceryl group from phosphatidylglycerol to the sulfhydryl group of the N-terminal cysteine of a prolipoprotein, the first step in the formation of mature lipoproteins. This Leptothrix cholodnii (strain ATCC 51168 / LMG 8142 / SP-6) (Leptothrix discophora (strain SP-6)) protein is Phosphatidylglycerol--prolipoprotein diacylglyceryl transferase.